Consider the following 418-residue polypeptide: Gamma-glutamyl phosphate reductase (418 aa).

This sequence belongs to the gamma-glutamyl phosphate reductase family.

It localises to the cytoplasm. The catalysed reaction is L-glutamate 5-semialdehyde + phosphate + NADP(+) = L-glutamyl 5-phosphate + NADPH + H(+). It participates in amino-acid biosynthesis; L-proline biosynthesis; L-glutamate 5-semialdehyde from L-glutamate: step 2/2. Functionally, catalyzes the NADPH-dependent reduction of L-glutamate 5-phosphate into L-glutamate 5-semialdehyde and phosphate. The product spontaneously undergoes cyclization to form 1-pyrroline-5-carboxylate. The protein is Gamma-glutamyl phosphate reductase of Trichlorobacter lovleyi (strain ATCC BAA-1151 / DSM 17278 / SZ) (Geobacter lovleyi).